Reading from the N-terminus, the 584-residue chain is BEL1-like homeodomain protein 8 (584 aa).

Positions 266-282 (SRFLEPAQKMLEEFCIS) are SR/KY domain. The tract at residues 292–317 (ESTSMEDDDDDDDNLSGFSSSSEPLE) is disordered. Acidic residues predominate over residues 295 to 305 (SMEDDDDDDDN). The segment at 316-387 (LEPKNRLKKA…ALRTAIAEHV (72 aa)) is BELL domain. Residues 424–486 (IWRPQRGLPE…NARVRLWKPM (63 aa)) constitute a DNA-binding region (homeobox). The tract at residues 503–529 (TSHNIEPSNRPNTVSSPSHEQTLTGLS) is disordered.

The protein belongs to the TALE/BELL homeobox family. As to quaternary structure, may form heterodimeric complex with the TALE/KNOX proteins STM and KNAT1/BP.

The protein localises to the nucleus. In terms of biological role, required for specifying floral primordia and establishing early internode patterning events during inflorescence development. In Arabidopsis thaliana (Mouse-ear cress), this protein is BEL1-like homeodomain protein 8 (BLH8).